The primary structure comprises 631 residues: Beta-galactosidase-1-like protein 3 (631 aa).

Glu-203 functions as the Proton donor in the catalytic mechanism. The active-site Nucleophile is the Glu-277.

This sequence belongs to the glycosyl hydrolase 35 family.

The protein is Beta-galactosidase-1-like protein 3 (Glb1l3) of Rattus norvegicus (Rat).